Here is a 103-residue protein sequence, read N- to C-terminus: Eukaryotic translation initiation factor 4E-1A-binding protein homolog (103 aa).

The tract at residues 49-103 (NSPLSKTPPPQLAHITNTELNKKVEKSTTTPTTTTPPTTTAKPKPTNDDDIFPME) is disordered. The segment covering 76–92 (TTTPTTTTPPTTTAKPK) has biased composition (low complexity).

It belongs to the eIF4E-binding protein family.

Its function is as follows. Regulates assembly of the eIF4F complex. This is Eukaryotic translation initiation factor 4E-1A-binding protein homolog (febA) from Dictyostelium discoideum (Social amoeba).